The primary structure comprises 94 residues: Aspartyl/glutamyl-tRNA(Asn/Gln) amidotransferase subunit C (94 aa).

Belongs to the GatC family. Heterotrimer of A, B and C subunits.

It catalyses the reaction L-glutamyl-tRNA(Gln) + L-glutamine + ATP + H2O = L-glutaminyl-tRNA(Gln) + L-glutamate + ADP + phosphate + H(+). The catalysed reaction is L-aspartyl-tRNA(Asn) + L-glutamine + ATP + H2O = L-asparaginyl-tRNA(Asn) + L-glutamate + ADP + phosphate + 2 H(+). Allows the formation of correctly charged Asn-tRNA(Asn) or Gln-tRNA(Gln) through the transamidation of misacylated Asp-tRNA(Asn) or Glu-tRNA(Gln) in organisms which lack either or both of asparaginyl-tRNA or glutaminyl-tRNA synthetases. The reaction takes place in the presence of glutamine and ATP through an activated phospho-Asp-tRNA(Asn) or phospho-Glu-tRNA(Gln). The chain is Aspartyl/glutamyl-tRNA(Asn/Gln) amidotransferase subunit C from Desulfotalea psychrophila (strain LSv54 / DSM 12343).